A 309-amino-acid chain; its full sequence is Ribosomal RNA small subunit methyltransferase H (309 aa).

S-adenosyl-L-methionine is bound by residues 33 to 35, aspartate 53, phenylalanine 79, aspartate 100, and glutamine 107; that span reads GGH.

It belongs to the methyltransferase superfamily. RsmH family.

It localises to the cytoplasm. The enzyme catalyses cytidine(1402) in 16S rRNA + S-adenosyl-L-methionine = N(4)-methylcytidine(1402) in 16S rRNA + S-adenosyl-L-homocysteine + H(+). Functionally, specifically methylates the N4 position of cytidine in position 1402 (C1402) of 16S rRNA. The sequence is that of Ribosomal RNA small subunit methyltransferase H from Clostridium botulinum (strain Kyoto / Type A2).